An 89-amino-acid chain; its full sequence is Large ribosomal subunit protein bL31B (89 aa).

Belongs to the bacterial ribosomal protein bL31 family. Type B subfamily. Part of the 50S ribosomal subunit.

The sequence is that of Large ribosomal subunit protein bL31B from Aeromonas salmonicida (strain A449).